A 391-amino-acid polypeptide reads, in one-letter code: Na(+)/H(+) antiporter NhaA (391 aa).

A run of 11 helical transmembrane segments spans residues alanine 14–leucine 34, leucine 59–valine 79, serine 95–phenylalanine 115, alanine 124–leucine 144, valine 154–phenylalanine 174, serine 177–leucine 197, leucine 213–isoleucine 233, phenylalanine 261–leucine 281, isoleucine 290–isoleucine 310, isoleucine 328–leucine 348, and leucine 363–valine 383.

It belongs to the NhaA Na(+)/H(+) (TC 2.A.33) antiporter family.

The protein localises to the cell inner membrane. The catalysed reaction is Na(+)(in) + 2 H(+)(out) = Na(+)(out) + 2 H(+)(in). Na(+)/H(+) antiporter that extrudes sodium in exchange for external protons. The protein is Na(+)/H(+) antiporter NhaA of Shewanella putrefaciens (strain CN-32 / ATCC BAA-453).